A 425-amino-acid polypeptide reads, in one-letter code: Sensor histidine kinase NarS (425 aa).

6 helical membrane-spanning segments follow: residues 42–62 (IASV…VVGT), 71–91 (IVLI…AYSA), 107–127 (LEPF…QLLS), 130–150 (GIYP…DVST), 155–175 (VVLA…PVML), and 181–201 (PETI…LMVV). One can recognise a Histidine kinase domain in the interval 224-425 (QTMTASEVLQ…HVCVELPLKR (202 aa)). At histidine 241 the chain carries Phosphohistidine; by autocatalysis.

Autophosphorylated on His-241.

Its subcellular location is the cell membrane. It carries out the reaction ATP + protein L-histidine = ADP + protein N-phospho-L-histidine.. Functionally, member of the two-component regulatory system NarS/NarL involved in gene expression during aerobic nitrate metabolism. Plays therefore a crucial role in anaerobic survival of mycobacteria in host. Functions as a sensor protein kinase which is autophosphorylated at a histidine residue and transfers its phosphate group to the conserved aspartic acid residue in the regulatory domain of NarL. In turn, NarL binds to the upstream promoter regions of target genes to regulate their expression during aerobic nitrate metabolism. This is Sensor histidine kinase NarS from Mycobacterium tuberculosis (strain ATCC 25618 / H37Rv).